We begin with the raw amino-acid sequence, 259 residues long: Ras-related protein Rab-34 (259 aa).

Position 1 is an N-acetylmethionine (methionine 1). Serine 62, valine 63, glycine 64, lysine 65, threonine 66, aspartate 78, tyrosine 81, and threonine 84 together coordinate GTP. A Mg(2+)-binding site is contributed by threonine 66. The Switch 1 motif lies at 71-89 (RFCKDTFDKNYKATIGVDF). Threonine 84 and aspartate 107 together coordinate Mg(2+). Positions 108–127 (TAGQERFKCIASTYYRGAQA) match the Switch 2 motif. GTP is bound by residues glycine 110, lysine 167, aspartate 169, and serine 198. Residues serine 241 and serine 244 each carry the phosphoserine modification. Residues cysteine 257 and cysteine 258 are each lipidated (S-geranylgeranyl cysteine).

It belongs to the small GTPase superfamily. Rab family. Interacts with RILP. The GTP-bound form interacts with REP15. Mg(2+) serves as cofactor.

The protein localises to the cytoplasm. The protein resides in the golgi apparatus. It is found in the cytoplasmic vesicle. It localises to the phagosome. Its subcellular location is the phagosome membrane. The protein localises to the cell projection. The protein resides in the cilium. It is found in the cytoskeleton. It localises to the microtubule organizing center. Its subcellular location is the centrosome. The protein localises to the centriole. It catalyses the reaction GTP + H2O = GDP + phosphate + H(+). With respect to regulation, regulated by guanine nucleotide exchange factors (GEFs) which promote the exchange of bound GDP for free GTP. Regulated by GTPase activating proteins (GAPs) which increase the GTP hydrolysis activity. Inhibited by GDP dissociation inhibitors (GDIs). Functionally, the small GTPases Rab are key regulators of intracellular membrane trafficking, from the formation of transport vesicles to their fusion with membranes. Rabs cycle between an inactive GDP-bound form and an active GTP-bound form that is able to recruit to membranes different sets of downstream effectors directly responsible for vesicle formation, movement, tethering and fusion. RAB34 transports protein involved in the redistribution of lysosomes to the peri-Golgi region. Plays a role in the maturation of phagosomes that engulf pathogens, such as S.aureus and M.tuberculosis. Plays a role in the fusion of phagosomes with lysosomes. Involved in ciliogenesis. In particular, it is required for early steps of the intracellular cilium assembly pathway initiated by trafficking and docking of ciliary vesicles to the centrioles in the cytoplasm, followed by axoneme formation in the cytoplasm. After axoneme elongation, the centrioles migrate close to the cell surface so that ciliary vesicles can fuse with the plasma membrane to expose cilia to the extracellular space. It seems dispensable for ciliogenesis via the extracellular pathway where cilium assembly begins after migration and docking of the centriole to the plasma membrane. Also acts as a positive regulator of hedgehog signaling and regulates ciliary function. The chain is Ras-related protein Rab-34 from Homo sapiens (Human).